The chain runs to 815 residues: (-)-kolavenyl diphosphate synthase TPS14, chloroplastic (815 aa).

A chloroplast-targeting transit peptide spans 1 to 51; the sequence is MFMSSSSSSHARRPQLSSFSYLHPPLPFPGLSFFNTRDKRVNFDSTRIICI. K247 is a binding site for substrate. Positions 379 and 381 each coordinate Mg(2+). The DXDD motif signature appears at 379-382; it reads DIDD. K465 lines the substrate pocket.

This sequence belongs to the terpene synthase family. Tpsc subfamily. The cofactor is Mg(2+).

It localises to the plastid. Its subcellular location is the chloroplast. It carries out the reaction (2E,6E,10E)-geranylgeranyl diphosphate = (-)-kolavenyl diphosphate. With respect to regulation, inhibited by high concentrations of magnesium. Functionally, diterpene synthase that catalyzes the formation of (-)-kolavenyl diphosphate from geranylgeranyl diphosphate (GGPP). The chain is (-)-kolavenyl diphosphate synthase TPS14, chloroplastic from Tripterygium wilfordii (Thunder God vine).